The primary structure comprises 240 residues: DNA repair protein RecO (240 aa).

The protein belongs to the RecO family.

Its function is as follows. Involved in DNA repair and RecF pathway recombination. In Wolbachia sp. subsp. Drosophila simulans (strain wRi), this protein is DNA repair protein RecO.